The primary structure comprises 257 residues: Glucosamine-6-phosphate deaminase (257 aa).

Catalysis depends on Asp64, which acts as the Proton acceptor; for enolization step. Residue Asn133 is the For ring-opening step of the active site. His135 (proton acceptor; for ring-opening step) is an active-site residue. The For ring-opening step role is filled by Glu140.

This sequence belongs to the glucosamine/galactosamine-6-phosphate isomerase family. NagB subfamily.

It catalyses the reaction alpha-D-glucosamine 6-phosphate + H2O = beta-D-fructose 6-phosphate + NH4(+). It functions in the pathway amino-sugar metabolism; N-acetylneuraminate degradation; D-fructose 6-phosphate from N-acetylneuraminate: step 5/5. Functionally, catalyzes the reversible isomerization-deamination of glucosamine 6-phosphate (GlcN6P) to form fructose 6-phosphate (Fru6P) and ammonium ion. In Corynebacterium urealyticum (strain ATCC 43042 / DSM 7109), this protein is Glucosamine-6-phosphate deaminase.